Here is a 1196-residue protein sequence, read N- to C-terminus: Ice nucleation protein (1196 aa).

Residues 172-1147 (ATYGSTLSGD…LSAGEDSTLI (976 aa)) form an octapeptide periodicity region. Disordered regions lie at residues 269–304 (GYGS…GYGS), 319–352 (GSTQ…GYGS), and 415–442 (GSTQ…GSNL). 2 stretches are compositionally biased toward polar residues: residues 271-298 (GSTQ…GSNL) and 319-346 (GSTQ…GSNL).

It belongs to the bacterial ice nucleation protein family. Membrane environment or aggregation seems to be required for ice nucleation activity.

The protein resides in the cell outer membrane. Ice nucleation proteins enable bacteria to nucleate crystallization in supercooled water. The chain is Ice nucleation protein (inaV) from Pseudomonas syringae.